The chain runs to 261 residues: 5'-nucleotidase SurE (261 aa).

Residues aspartate 8, aspartate 9, serine 43, and asparagine 96 each coordinate a divalent metal cation.

It belongs to the SurE nucleotidase family. A divalent metal cation serves as cofactor.

Its subcellular location is the cytoplasm. It catalyses the reaction a ribonucleoside 5'-phosphate + H2O = a ribonucleoside + phosphate. In terms of biological role, nucleotidase that shows phosphatase activity on nucleoside 5'-monophosphates. The sequence is that of 5'-nucleotidase SurE from Roseobacter denitrificans (strain ATCC 33942 / OCh 114) (Erythrobacter sp. (strain OCh 114)).